An 86-amino-acid polypeptide reads, in one-letter code: uncharacterized protein (86 aa).

2 helical membrane passes run 20-38 (IQFWGFVAATGVLLYSVYL) and 47-63 (FSTFLFACVGTAATKGV). The tract at residues 67 to 86 (LSQRREQGKEQGREQGREQE) is disordered. Over residues 69–86 (QRREQGKEQGREQGREQE) the composition is skewed to basic and acidic residues.

Its subcellular location is the cell membrane. This is an uncharacterized protein from Haemophilus influenzae (strain ATCC 51907 / DSM 11121 / KW20 / Rd).